The primary structure comprises 156 residues: Cell division protein SepF (156 aa).

Positions P17–S44 are disordered.

The protein belongs to the SepF family. Homodimer. Interacts with FtsZ.

The protein localises to the cytoplasm. Functionally, cell division protein that is part of the divisome complex and is recruited early to the Z-ring. Probably stimulates Z-ring formation, perhaps through the cross-linking of FtsZ protofilaments. Its function overlaps with FtsA. The sequence is that of Cell division protein SepF from Limosilactobacillus fermentum (strain NBRC 3956 / LMG 18251) (Lactobacillus fermentum).